The chain runs to 238 residues: MRPSGRQPDQLRPVTLTRHYTRHAEGSVLVCFGDTHVLCTASVLPKVPPHKKGSGEGWVTAEYGMLPRSTHTRSDREAARGKQSGRTQEIQRLIGRAMRSVFDLSALGEHTIHLDCDVLQADGGTRTASITGAFVAAHDAISVMRKKGQLTGEPIRDFVAAVSVGVVDGVPVLDLDYPEDASCDTDMNIVMTGAGGFVEVQGTAEGTPFTRTEMDALLGLADHGIRTLIGLQKQALGL.

The segment at 67 to 87 (PRSTHTRSDREAARGKQSGRT) is disordered. Residues R86 and 124 to 126 (GTR) each bind phosphate.

This sequence belongs to the RNase PH family. In terms of assembly, homohexameric ring arranged as a trimer of dimers.

The catalysed reaction is tRNA(n+1) + phosphate = tRNA(n) + a ribonucleoside 5'-diphosphate. Its function is as follows. Phosphorolytic 3'-5' exoribonuclease that plays an important role in tRNA 3'-end maturation. Removes nucleotide residues following the 3'-CCA terminus of tRNAs; can also add nucleotides to the ends of RNA molecules by using nucleoside diphosphates as substrates, but this may not be physiologically important. Probably plays a role in initiation of 16S rRNA degradation (leading to ribosome degradation) during starvation. The chain is Ribonuclease PH from Ralstonia nicotianae (strain ATCC BAA-1114 / GMI1000) (Ralstonia solanacearum).